The following is a 72-amino-acid chain: Disintegrin batroxostatin (72 aa).

Positions 1-72 (EAGEECDCGA…SADCPRNRFY (72 aa)) constitute a Disintegrin domain. Cystine bridges form between C6–C21, C8–C16, C15–C38, C29–C35, C34–C59, and C47–C66. Positions 51 to 53 (RGD) match the Cell attachment site motif. The segment at 52–72 (GDNPDDRCTGQSADCPRNRFY) is disordered.

Belongs to the venom metalloproteinase (M12B) family. P-II subfamily. P-IIa sub-subfamily. As to quaternary structure, monomer. As to expression, expressed by the venom gland.

It is found in the secreted. Its function is as follows. Inhibits fibrinogen interaction with platelets. Acts by binding to the glycoprotein IIb-IIIa receptor (ITGA2B/ITGB3) on the platelet surface and inhibits aggregation induced by ADP, thrombin, platelet-activating factor and collagen. Also inhibits T24 and SK-Mel-28 cell adhesion to fibronectin with IC(50) of 4.4 uM and 33 nM, respectively. In Bothrops atrox (Barba amarilla), this protein is Disintegrin batroxostatin.